The sequence spans 36 residues: uncharacterized protein (36 aa).

This is an uncharacterized protein from Archaeoglobus fulgidus (strain ATCC 49558 / DSM 4304 / JCM 9628 / NBRC 100126 / VC-16).